A 313-amino-acid polypeptide reads, in one-letter code: tRNA dimethylallyltransferase (313 aa).

17–24 (GPTASGKT) contacts ATP. 19 to 24 (TASGKT) is a substrate binding site. 3 interaction with substrate tRNA regions span residues 42 to 45 (DSAL), 166 to 170 (QRLSR), and 247 to 252 (RCVGYR).

This sequence belongs to the IPP transferase family. Monomer. Requires Mg(2+) as cofactor.

It carries out the reaction adenosine(37) in tRNA + dimethylallyl diphosphate = N(6)-dimethylallyladenosine(37) in tRNA + diphosphate. Catalyzes the transfer of a dimethylallyl group onto the adenine at position 37 in tRNAs that read codons beginning with uridine, leading to the formation of N6-(dimethylallyl)adenosine (i(6)A). The sequence is that of tRNA dimethylallyltransferase from Pectobacterium atrosepticum (strain SCRI 1043 / ATCC BAA-672) (Erwinia carotovora subsp. atroseptica).